Consider the following 265-residue polypeptide: Protein HesA, vegetative (265 aa).

It belongs to the HesA/MoeB/ThiF family.

The chain is Protein HesA, vegetative (hesA2) from Trichormus variabilis (strain ATCC 29413 / PCC 7937) (Anabaena variabilis).